We begin with the raw amino-acid sequence, 100 residues long: Urease subunit gamma (100 aa).

It belongs to the urease gamma subunit family. In terms of assembly, heterotrimer of UreA (gamma), UreB (beta) and UreC (alpha) subunits. Three heterotrimers associate to form the active enzyme.

The protein resides in the cytoplasm. The enzyme catalyses urea + 2 H2O + H(+) = hydrogencarbonate + 2 NH4(+). It participates in nitrogen metabolism; urea degradation; CO(2) and NH(3) from urea (urease route): step 1/1. This Rhizobium leguminosarum bv. viciae protein is Urease subunit gamma.